The following is a 126-amino-acid chain: uncharacterized protein (126 aa).

The helical transmembrane segment at 3 to 23 (NMIVLIIFAAFIIYMIASYVY) threads the bilayer. The Rhodanese domain occupies 39–123 (GYRKAQLIDV…GFKKWGGKIK (85 aa)).

It localises to the cell membrane. This is an uncharacterized protein from Bacillus subtilis (strain 168).